Reading from the N-terminus, the 105-residue chain is Vacuolar ATPase assembly integral membrane protein VMA21 homolog (105 aa).

The interval 1-26 (MSTKNKKAAGGNGVAPKQTRQQSHDS) is disordered. Residues 1-36 (MSTKNKKAAGGNGVAPKQTRQQSHDSQDYSSFKTVL) are Cytoplasmic-facing. A helical transmembrane segment spans residues 37 to 57 (FYCMLIVFLPVLTFFVLKGFV). The Lumenal portion of the chain corresponds to 58 to 68 (LDQFLDISEVK). A helical transmembrane segment spans residues 69–89 (VNIASAVGAVVALHIALGLYI). Over 90 to 105 (YRAYFGAPGSKGSKTD) the chain is Cytoplasmic.

This sequence belongs to the VMA21 family.

Its subcellular location is the endoplasmic reticulum membrane. The protein resides in the endoplasmic reticulum-Golgi intermediate compartment membrane. The protein localises to the cytoplasmic vesicle. It localises to the COPII-coated vesicle membrane. Required for the assembly of the V0 complex of the vacuolar ATPase (V-ATPase) in the endoplasmic reticulum. In Drosophila melanogaster (Fruit fly), this protein is Vacuolar ATPase assembly integral membrane protein VMA21 homolog.